A 387-amino-acid polypeptide reads, in one-letter code: Formate-dependent phosphoribosylglycinamide formyltransferase (387 aa).

N(1)-(5-phospho-beta-D-ribosyl)glycinamide is bound by residues 12 to 13 (EL) and E72. Residues R104, K145, 150–155 (SSGKGQ), 185–188 (EEFI), and E193 each bind ATP. In terms of domain architecture, ATP-grasp spans 109 to 300 (DLAARELGLA…EFELHLRAVL (192 aa)). The Mg(2+) site is built by E258 and E270. Residues D277, K347, and 354 to 355 (RR) each bind N(1)-(5-phospho-beta-D-ribosyl)glycinamide.

The protein belongs to the PurK/PurT family. In terms of assembly, homodimer.

It catalyses the reaction N(1)-(5-phospho-beta-D-ribosyl)glycinamide + formate + ATP = N(2)-formyl-N(1)-(5-phospho-beta-D-ribosyl)glycinamide + ADP + phosphate + H(+). It functions in the pathway purine metabolism; IMP biosynthesis via de novo pathway; N(2)-formyl-N(1)-(5-phospho-D-ribosyl)glycinamide from N(1)-(5-phospho-D-ribosyl)glycinamide (formate route): step 1/1. Functionally, involved in the de novo purine biosynthesis. Catalyzes the transfer of formate to 5-phospho-ribosyl-glycinamide (GAR), producing 5-phospho-ribosyl-N-formylglycinamide (FGAR). Formate is provided by PurU via hydrolysis of 10-formyl-tetrahydrofolate. This chain is Formate-dependent phosphoribosylglycinamide formyltransferase, found in Anaeromyxobacter dehalogenans (strain 2CP-C).